Consider the following 24-residue polypeptide: Probable caffeoyl-CoA O-methyltransferase (24 aa).

Belongs to the class I-like SAM-binding methyltransferase superfamily. Cation-dependent O-methyltransferase family. CCoAMT subfamily. It depends on a divalent metal cation as a cofactor.

The catalysed reaction is (E)-caffeoyl-CoA + S-adenosyl-L-methionine = (E)-feruloyl-CoA + S-adenosyl-L-homocysteine + H(+). The protein operates within aromatic compound metabolism; phenylpropanoid biosynthesis. In terms of biological role, methylates caffeoyl-CoA to feruloyl-CoA and 5-hydroxyferuloyl-CoA to sinapoyl-CoA. Plays a role in the synthesis of feruloylated polysaccharides. Involved in the reinforcement of the plant cell wall. Also involved in the responding to wounding or pathogen challenge by the increased formation of cell wall-bound ferulic acid polymers. This is Probable caffeoyl-CoA O-methyltransferase from Pinus pinaster (Maritime pine).